Here is a 299-residue protein sequence, read N- to C-terminus: Transcription elongation factor A protein 2 (299 aa).

In terms of domain architecture, TFIIS N-terminal spans 6 to 83 (EEIARIARRL…KSWKKLLDAS (78 aa)). A Glycyl lysine isopeptide (Lys-Gly) (interchain with G-Cter in ubiquitin) cross-link involves residue lysine 58. A phosphoserine mark is found at serine 60 and serine 100. Positions 86–128 (KARERGRGMPLPTSSRDASEAPDPSRKRPELPRAPSTPRITTF) are disordered. Positions 102–116 (DASEAPDPSRKRPEL) are enriched in basic and acidic residues. Positions 138–254 (VRNKCREMLT…EHQMARTGGT (117 aa)) constitute a TFIIS central domain. The segment at 257-297 (DLFTCGKCRKKNCTYTQVQTRSSDEPMTTFVVCNECGNRWK) adopts a TFIIS-type zinc-finger fold. Zn(2+) is bound by residues cysteine 261, cysteine 264, cysteine 289, and cysteine 292.

The protein belongs to the TFS-II family. In terms of assembly, interacts with the basal transcription factor GTF2B. Interacts with REXO1. Testis and ovary specific.

It localises to the nucleus. Necessary for efficient RNA polymerase II transcription elongation past template-encoded arresting sites. The arresting sites in DNA have the property of trapping a certain fraction of elongating RNA polymerases that pass through, resulting in locked ternary complexes. Cleavage of the nascent transcript by S-II allows the resumption of elongation from the new 3'-terminus. In Homo sapiens (Human), this protein is Transcription elongation factor A protein 2 (TCEA2).